Reading from the N-terminus, the 332-residue chain is UPF0194 membrane protein YbhG (332 aa).

The N-terminal stretch at 1 to 16 is a signal peptide; that stretch reads MMKKPVVIGLAVVVLA. Residues 107-209 adopt a coiled-coil conformation; the sequence is NEEIAQAAAA…LNLQDSTLIA (103 aa).

The protein belongs to the UPF0194 family.

It localises to the periplasm. This chain is UPF0194 membrane protein YbhG, found in Escherichia coli (strain K12 / MC4100 / BW2952).